We begin with the raw amino-acid sequence, 229 residues long: Pdp3-interacting factor 1 (229 aa).

Asp12 (nucleophile) is an active-site residue. Mg(2+)-binding residues include Asp12, Asp14, and Asp176. Asp14 serves as the catalytic Proton donor.

It belongs to the HAD-like hydrolase superfamily. As to quaternary structure, component of the mst2 complex composed of at least eaf6, mst2, nto1, pdp3, ptf1, ptf2 and tfg3. Mg(2+) is required as a cofactor.

The protein localises to the cytoplasm. It is found in the nucleus. The catalysed reaction is D-ribitol 5-phosphate + H2O = ribitol + phosphate. It catalyses the reaction D-sorbitol 6-phosphate + H2O = D-sorbitol + phosphate. The enzyme catalyses sn-glycerol 1-phosphate + H2O = glycerol + phosphate. It carries out the reaction D-erythrose 4-phosphate + H2O = D-erythrose + phosphate. In terms of biological role, component of the mst2 complex which is a highly specific H3 lysine 14 (H3K14) acetyltransferase that functions together with gcn5 to regulate global levels of H3K14 acetylation (H3K14ac), critical for DNA damage checkpoint activation. May also function as a sugar alcohol (polyol) phosphatase that prevents accumulation of toxic levels of polyol phosphates, which can impair glycolysis by inhibiting glucose-6-phosphate isomerase. This is Pdp3-interacting factor 1 from Schizosaccharomyces pombe (strain 972 / ATCC 24843) (Fission yeast).